The sequence spans 269 residues: Hydroxyethylthiazole kinase (269 aa).

Substrate is bound at residue M42. Positions 118 and 164 each coordinate ATP. G191 contributes to the substrate binding site.

The protein belongs to the Thz kinase family. Mg(2+) serves as cofactor.

The enzyme catalyses 5-(2-hydroxyethyl)-4-methylthiazole + ATP = 4-methyl-5-(2-phosphooxyethyl)-thiazole + ADP + H(+). Its pathway is cofactor biosynthesis; thiamine diphosphate biosynthesis; 4-methyl-5-(2-phosphoethyl)-thiazole from 5-(2-hydroxyethyl)-4-methylthiazole: step 1/1. Catalyzes the phosphorylation of the hydroxyl group of 4-methyl-5-beta-hydroxyethylthiazole (THZ). In Listeria monocytogenes serotype 4a (strain HCC23), this protein is Hydroxyethylthiazole kinase.